The primary structure comprises 709 residues: ATP-binding cassette sub-family F member 3 (709 aa).

Position 2 is an N-acetylalanine (Ala-2). Residue Ser-83 is modified to Phosphoserine. Over residues 129–143 the composition is skewed to basic and acidic residues; it reads RLKAKQEKRSEKDTL. The interval 129–171 is disordered; the sequence is RLKAKQEKRSEKDTLKTSNPLVLEEASASQAGSRKESRLESSG. A phosphoserine mark is found at Ser-155, Ser-157, and Ser-161. A compositionally biased stretch (basic and acidic residues) spans 161-171; sequence SRKESRLESSG. ABC transporter domains are found at residues 178–424 and 492–707; these read VRIE…LNQQ and LQLD…RREG. 210–217 provides a ligand contact to ATP; the sequence is GRNGLGKT. Residue Ser-283 is modified to Phosphoserine. 525–532 is a binding site for ATP; the sequence is GENGAGKS.

The protein belongs to the ABC transporter superfamily. ABCF family. EF3 subfamily.

Its function is as follows. Displays an antiviral effect against flaviviruses in the presence of OAS1B. In Pongo abelii (Sumatran orangutan), this protein is ATP-binding cassette sub-family F member 3 (ABCF3).